Reading from the N-terminus, the 913-residue chain is Valine--tRNA ligase (913 aa).

The 'HIGH' region signature appears at 48 to 58 (PNVTGSLHMGH). A 'KMSKS' region motif is present at residues 541–545 (KMSKS). ATP is bound at residue Lys-544. A coiled-coil region spans residues 839–907 (VVDLEALVSK…IEHRLQSLGV (69 aa)).

It belongs to the class-I aminoacyl-tRNA synthetase family. ValS type 1 subfamily. Monomer.

Its subcellular location is the cytoplasm. It catalyses the reaction tRNA(Val) + L-valine + ATP = L-valyl-tRNA(Val) + AMP + diphosphate. Functionally, catalyzes the attachment of valine to tRNA(Val). As ValRS can inadvertently accommodate and process structurally similar amino acids such as threonine, to avoid such errors, it has a 'posttransfer' editing activity that hydrolyzes mischarged Thr-tRNA(Val) in a tRNA-dependent manner. The protein is Valine--tRNA ligase of Thermosynechococcus vestitus (strain NIES-2133 / IAM M-273 / BP-1).